Consider the following 176-residue polypeptide: Ribosome maturation factor RimM (176 aa).

The PRC barrel domain maps to 97–176; sequence EDEFYWRDLI…QIIVDWDPDF (80 aa).

The protein belongs to the RimM family. Binds ribosomal protein uS19.

The protein localises to the cytoplasm. Functionally, an accessory protein needed during the final step in the assembly of 30S ribosomal subunit, possibly for assembly of the head region. Essential for efficient processing of 16S rRNA. May be needed both before and after RbfA during the maturation of 16S rRNA. It has affinity for free ribosomal 30S subunits but not for 70S ribosomes. The protein is Ribosome maturation factor RimM of Shewanella amazonensis (strain ATCC BAA-1098 / SB2B).